Consider the following 293-residue polypeptide: Formamidopyrimidine-DNA glycosylase (293 aa).

P2 acts as the Schiff-base intermediate with DNA in catalysis. E3 (proton donor) is an active-site residue. K61 serves as the catalytic Proton donor; for beta-elimination activity. DNA-binding residues include H104, R123, and K169. The FPG-type zinc-finger motif lies at 255–289 (DAYGREGEPCRRCGAIMRRDKFMNRSSFYCPRCQP). The active-site Proton donor; for delta-elimination activity is the R279.

Belongs to the FPG family. Monomer. Zn(2+) is required as a cofactor.

The catalysed reaction is Hydrolysis of DNA containing ring-opened 7-methylguanine residues, releasing 2,6-diamino-4-hydroxy-5-(N-methyl)formamidopyrimidine.. It catalyses the reaction 2'-deoxyribonucleotide-(2'-deoxyribose 5'-phosphate)-2'-deoxyribonucleotide-DNA = a 3'-end 2'-deoxyribonucleotide-(2,3-dehydro-2,3-deoxyribose 5'-phosphate)-DNA + a 5'-end 5'-phospho-2'-deoxyribonucleoside-DNA + H(+). Involved in base excision repair of DNA damaged by oxidation or by mutagenic agents. Acts as a DNA glycosylase that recognizes and removes damaged bases. Has a preference for oxidized purines, such as 7,8-dihydro-8-oxoguanine (8-oxoG). Has AP (apurinic/apyrimidinic) lyase activity and introduces nicks in the DNA strand. Cleaves the DNA backbone by beta-delta elimination to generate a single-strand break at the site of the removed base with both 3'- and 5'-phosphates. In Mycolicibacterium vanbaalenii (strain DSM 7251 / JCM 13017 / BCRC 16820 / KCTC 9966 / NRRL B-24157 / PYR-1) (Mycobacterium vanbaalenii), this protein is Formamidopyrimidine-DNA glycosylase.